Reading from the N-terminus, the 209-residue chain is uncharacterized protein (209 aa).

3 helical membrane-spanning segments follow: residues 26–48 (LRYFIPYPAELLLFAIPLVGLAV), 147–169 (AYLVYLPAFFFALLVYFLYPFLM), and 179–196 (IVAAVLGIAAFFAGVYLL).

The protein resides in the cell membrane. This is an uncharacterized protein from Archaeoglobus fulgidus (strain ATCC 49558 / DSM 4304 / JCM 9628 / NBRC 100126 / VC-16).